Consider the following 400-residue polypeptide: Acyl-CoA dehydrogenase FadE26 (400 aa).

FAD contacts are provided by residues 127-130, T136, and S162; that span reads IGYS. E247 functions as the Proton acceptor in the catalytic mechanism. 380–382 contacts FAD; sequence TNE.

The protein belongs to the acyl-CoA dehydrogenase family. In terms of assembly, heterotetramer (dimer of heterodimers) composed of FadE26 and FadE27. FAD serves as cofactor.

The enzyme catalyses (25S)-3-oxocholest-4-en-26-oyl-CoA + A = 3-oxo-cholest-4,24-dien-26-oyl-CoA + AH2. It participates in steroid metabolism; cholesterol degradation. Uncompetitively inhibited by high concentration of 3-OCS-CoA. Its function is as follows. Involved in the first cycle of side chain dehydrogenation in the beta-oxidation of cholesterol catabolism. It contributes partly to the virulence by increasing the efficiency of beta-oxidation. Catalyzes the dehydrogenation of acyl-CoA ester side chains of (25S)-3-oxo-cholest-4-en-26-oyl-CoA (3-OCS-CoA) to yield (24E)-3-oxo-cholest-4,24-dien-26-oyl-CoA. Also able to dehydrogenate steroyl-CoA such as 3-oxo-chol-4-en-24-oyl-CoA (3-OCO-CoA) as well as 3-oxo-4-pregnene-20-carboxyl-CoA (3-OPC-CoA). It dehydrogenates only (25S)-OCS-CoA diastereomer. The sequence is that of Acyl-CoA dehydrogenase FadE26 (fadE26) from Mycobacterium tuberculosis (strain ATCC 25618 / H37Rv).